Consider the following 254-residue polypeptide: Ornithine decarboxylase antizyme (254 aa).

The protein belongs to the ODC antizyme family. Interacts with ODC1 and thereby sterically blocks ODC homodimerization.

Its function is as follows. Ornithine decarboxylase (ODC) antizyme protein that negatively regulates ODC activity and intracellular polyamine biosynthesis and uptake in response to increased intracellular polyamine levels. Binds to ODC monomers, inhibiting the assembly of the functional ODC homodimer, and targets the monomers for ubiquitin-independent proteolytic destruction by the 26S proteasome. Required for cellular differentiation in neuronal and myogenic lineages during embryonic development. The protein is Ornithine decarboxylase antizyme (Oda) of Drosophila melanogaster (Fruit fly).